We begin with the raw amino-acid sequence, 228 residues long: Prolactin-2B1 (228 aa).

A signal peptide spans 1 to 31; that stretch reads MLLSLTQMLSSRASSRLFLVSYLLLWENVVS. 2 disulfide bridges follow: cysteine 89–cysteine 194 and cysteine 203–cysteine 228.

This sequence belongs to the somatotropin/prolactin family. Expressed specifically in placenta. Expressed at high levels in trophoblast cells from both junctional and labyrinth zones of the chorioallantoic placenta the last week of gestation.

The protein localises to the secreted. The polypeptide is Prolactin-2B1 (Prl2b1) (Mus musculus (Mouse)).